Consider the following 464-residue polypeptide: mRNA capping enzyme LEF-4 (464 aa).

The mRNA triphosphatase stretch occupies residues 1 to 204; that stretch reads MDYGDFVIEK…NVMCNIIADM (204 aa). The mRNA guanylyltransferase stretch occupies residues 205–464; sequence EALTDAQNIS…KHRRDRIVPN (260 aa). Lysine 255 acts as the N6-GMP-lysine intermediate in catalysis.

The protein belongs to the baculoviridae LEF-4 family. In terms of assembly, interacts with LEF-8, LEF-9, and p47.

Its subcellular location is the host cytoplasm. The protein resides in the host nucleus. It catalyses the reaction a 5'-end diphospho-ribonucleoside in mRNA + GTP + H(+) = a 5'-end (5'-triphosphoguanosine)-ribonucleoside in mRNA + diphosphate. The enzyme catalyses a 5'-end triphospho-ribonucleoside in mRNA + H2O = a 5'-end diphospho-ribonucleoside in mRNA + phosphate + H(+). Its function is as follows. Component of the viral DNA-dependent RNA polymerase that catalyzes two reactions involved in viral RNA cap formation: an RNA 5'-triphosphatase that hydrolyzes the gamma phosphate of triphosphate-terminated RNA and a guanylyltransferase that reacts with GTP to form a covalent protein-guanylate adduct. Therefore plays an essential role in late and very late gene expression. The polypeptide is mRNA capping enzyme LEF-4 (LEF-4) (Autographa californica nuclear polyhedrosis virus (AcMNPV)).